The primary structure comprises 220 residues: MDDFRKYATKHLGMNGMVLDDVIKSQAGYLNPYILEERQLNVTQLDVFSRLMMDRIIFLGTQVDDYTANTLQAQLLYLDSVDPGKDISIYINSPGGSVYAGLGIYDTMQFISSDVATICTGMAASMAAVLLVAGAEGKRSALPHSRVMIHQPMGGAQGQASDIEITAREIQKLKKELYTIIADHSHTDFDKVWADSDRDYWMTAQEAKEYGMIDEVLIKK.

Serine 125 acts as the Nucleophile in catalysis. The active site involves histidine 150.

The protein belongs to the peptidase S14 family. Fourteen ClpP subunits assemble into 2 heptameric rings which stack back to back to give a disk-like structure with a central cavity, resembling the structure of eukaryotic proteasomes.

It localises to the cytoplasm. It carries out the reaction Hydrolysis of proteins to small peptides in the presence of ATP and magnesium. alpha-casein is the usual test substrate. In the absence of ATP, only oligopeptides shorter than five residues are hydrolyzed (such as succinyl-Leu-Tyr-|-NHMec, and Leu-Tyr-Leu-|-Tyr-Trp, in which cleavage of the -Tyr-|-Leu- and -Tyr-|-Trp bonds also occurs).. Its function is as follows. Cleaves peptides in various proteins in a process that requires ATP hydrolysis. Has a chymotrypsin-like activity. Plays a major role in the degradation of misfolded proteins. This chain is ATP-dependent Clp protease proteolytic subunit, found in Bacteroides thetaiotaomicron (strain ATCC 29148 / DSM 2079 / JCM 5827 / CCUG 10774 / NCTC 10582 / VPI-5482 / E50).